The primary structure comprises 112 residues: Nitrogen regulatory protein P-II (112 aa).

Position 51 is an O-UMP-tyrosine (tyrosine 51).

Belongs to the P(II) protein family. As to quaternary structure, homotrimer.

In nitrogen-limiting conditions, when the ratio of Gln to 2-ketoglutarate decreases, P-II is uridylylated to P-II-UMP. P-II-UMP allows the deadenylation of glutamine synthetase (GS), thus activating the enzyme. Conversely, in nitrogen excess P-II is deuridylated and promotes the adenylation of GS. P-II indirectly controls the transcription of the GS gene (glnA). P-II prevents NR-II-catalyzed conversion of NR-I to NR-I-phosphate, the transcriptional activator of glnA. When P-II is uridylylated to P-II-UMP, these events are reversed. This Klebsiella oxytoca protein is Nitrogen regulatory protein P-II (glnB).